The primary structure comprises 366 residues: UDP-N-acetylglucosamine--N-acetylmuramyl-(pentapeptide) pyrophosphoryl-undecaprenol N-acetylglucosamine transferase (366 aa).

UDP-N-acetyl-alpha-D-glucosamine is bound by residues 14-16 (TGG), Asn128, Arg169, Ser201, Ile251, and Gln296.

This sequence belongs to the glycosyltransferase 28 family. MurG subfamily.

Its subcellular location is the cell inner membrane. The catalysed reaction is di-trans,octa-cis-undecaprenyl diphospho-N-acetyl-alpha-D-muramoyl-L-alanyl-D-glutamyl-meso-2,6-diaminopimeloyl-D-alanyl-D-alanine + UDP-N-acetyl-alpha-D-glucosamine = di-trans,octa-cis-undecaprenyl diphospho-[N-acetyl-alpha-D-glucosaminyl-(1-&gt;4)]-N-acetyl-alpha-D-muramoyl-L-alanyl-D-glutamyl-meso-2,6-diaminopimeloyl-D-alanyl-D-alanine + UDP + H(+). It participates in cell wall biogenesis; peptidoglycan biosynthesis. Cell wall formation. Catalyzes the transfer of a GlcNAc subunit on undecaprenyl-pyrophosphoryl-MurNAc-pentapeptide (lipid intermediate I) to form undecaprenyl-pyrophosphoryl-MurNAc-(pentapeptide)GlcNAc (lipid intermediate II). The polypeptide is UDP-N-acetylglucosamine--N-acetylmuramyl-(pentapeptide) pyrophosphoryl-undecaprenol N-acetylglucosamine transferase (Christiangramia forsetii (strain DSM 17595 / CGMCC 1.15422 / KT0803) (Gramella forsetii)).